Here is a 398-residue protein sequence, read N- to C-terminus: NADH-quinone oxidoreductase subunit D (398 aa).

It belongs to the complex I 49 kDa subunit family. In terms of assembly, NDH-1 is composed of 14 different subunits. Subunits NuoB, C, D, E, F, and G constitute the peripheral sector of the complex.

It is found in the cell inner membrane. It catalyses the reaction a quinone + NADH + 5 H(+)(in) = a quinol + NAD(+) + 4 H(+)(out). NDH-1 shuttles electrons from NADH, via FMN and iron-sulfur (Fe-S) centers, to quinones in the respiratory chain. The immediate electron acceptor for the enzyme in this species is believed to be ubiquinone. Couples the redox reaction to proton translocation (for every two electrons transferred, four hydrogen ions are translocated across the cytoplasmic membrane), and thus conserves the redox energy in a proton gradient. The polypeptide is NADH-quinone oxidoreductase subunit D (Caulobacter vibrioides (strain ATCC 19089 / CIP 103742 / CB 15) (Caulobacter crescentus)).